Here is a 105-residue protein sequence, read N- to C-terminus: Pyrimidine/purine nucleoside phosphorylase (105 aa).

Belongs to the nucleoside phosphorylase PpnP family.

The enzyme catalyses a purine D-ribonucleoside + phosphate = a purine nucleobase + alpha-D-ribose 1-phosphate. It carries out the reaction adenosine + phosphate = alpha-D-ribose 1-phosphate + adenine. It catalyses the reaction cytidine + phosphate = cytosine + alpha-D-ribose 1-phosphate. The catalysed reaction is guanosine + phosphate = alpha-D-ribose 1-phosphate + guanine. The enzyme catalyses inosine + phosphate = alpha-D-ribose 1-phosphate + hypoxanthine. It carries out the reaction thymidine + phosphate = 2-deoxy-alpha-D-ribose 1-phosphate + thymine. It catalyses the reaction uridine + phosphate = alpha-D-ribose 1-phosphate + uracil. The catalysed reaction is xanthosine + phosphate = alpha-D-ribose 1-phosphate + xanthine. In terms of biological role, catalyzes the phosphorolysis of diverse nucleosides, yielding D-ribose 1-phosphate and the respective free bases. Can use uridine, adenosine, guanosine, cytidine, thymidine, inosine and xanthosine as substrates. Also catalyzes the reverse reactions. In Ralstonia pickettii (strain 12J), this protein is Pyrimidine/purine nucleoside phosphorylase.